The following is a 1106-amino-acid chain: Voltage-dependent calcium channel subunit alpha-2/delta-1 (1106 aa).

An N-terminal signal peptide occupies residues methionine 1–glutamate 26. Topologically, residues glutamate 27–glycine 1076 are extracellular. A glycan (N-linked (GlcNAc...) asparagine) is linked at asparagine 94. Serine 121 is subject to Phosphoserine. N-linked (GlcNAc...) asparagine glycosylation is found at asparagine 138 and asparagine 186. A VWFA domain is found at aspartate 255–leucine 432. Residues aspartate 261, serine 263, and serine 265 each coordinate a divalent metal cation. The short motif at aspartate 261–serine 265 is the MIDAS-like motif element. N-linked (GlcNAc...) asparagine glycans are attached at residues asparagine 326 and asparagine 350. A disulfide bridge connects residues cysteine 406 and cysteine 1062. Residues tryptophan 448 to proline 539 form the Cache domain. Residues asparagine 615, asparagine 784, and asparagine 891 are each glycosylated (N-linked (GlcNAc...) asparagine). A helical membrane pass occupies residues valine 1077–leucine 1097. The Cytoplasmic segment spans residues valine 1098–leucine 1106.

This sequence belongs to the calcium channel subunit alpha-2/delta family. Dimer formed of alpha-2-1 and delta-1 chains; disulfide-linked. Voltage-dependent calcium channels are multisubunit complexes, consisting of alpha-1 (CACNA1), alpha-2 (CACNA2D), beta (CACNB) and delta (CACNA2D) subunits in a 1:1:1:1 ratio. In terms of processing, proteolytically processed into subunits alpha-2-1 and delta-1 that are disulfide-linked. In terms of tissue distribution, skeletal muscle.

The protein localises to the membrane. Its subcellular location is the cell membrane. The alpha-2/delta subunit of voltage-dependent calcium channels regulates calcium current density and activation/inactivation kinetics of the calcium channel. Plays an important role in excitation-contraction coupling. The chain is Voltage-dependent calcium channel subunit alpha-2/delta-1 (CACNA2D1) from Oryctolagus cuniculus (Rabbit).